Reading from the N-terminus, the 62-residue chain is Photosystem II reaction center protein Z (62 aa).

2 helical membrane passes run 8-28 and 41-61; these read AVFALIVTSSILLISVPVVFA and FSGTSLWIGLVFLVGILNSLI.

Belongs to the PsbZ family. As to quaternary structure, PSII is composed of 1 copy each of membrane proteins PsbA, PsbB, PsbC, PsbD, PsbE, PsbF, PsbH, PsbI, PsbJ, PsbK, PsbL, PsbM, PsbT, PsbY, PsbZ, Psb30/Ycf12, at least 3 peripheral proteins of the oxygen-evolving complex and a large number of cofactors. It forms dimeric complexes.

The protein resides in the plastid. It is found in the chloroplast thylakoid membrane. Functionally, may control the interaction of photosystem II (PSII) cores with the light-harvesting antenna, regulates electron flow through the 2 photosystem reaction centers. PSII is a light-driven water plastoquinone oxidoreductase, using light energy to abstract electrons from H(2)O, generating a proton gradient subsequently used for ATP formation. This chain is Photosystem II reaction center protein Z, found in Cucumis sativus (Cucumber).